The primary structure comprises 361 residues: Peptide chain release factor 1 (361 aa).

At Gln-238 the chain carries N5-methylglutamine.

It belongs to the prokaryotic/mitochondrial release factor family. In terms of processing, methylated by PrmC. Methylation increases the termination efficiency of RF1.

Its subcellular location is the cytoplasm. In terms of biological role, peptide chain release factor 1 directs the termination of translation in response to the peptide chain termination codons UAG and UAA. This is Peptide chain release factor 1 from Mesomycoplasma hyopneumoniae (strain 232) (Mycoplasma hyopneumoniae).